The following is a 226-amino-acid chain: Gap junction beta-2 protein (226 aa).

Residues 2–13 lie within the membrane without spanning it; that stretch reads DWSALQTILGGV. At 14–20 the chain is on the cytoplasmic side; that stretch reads NKHSTSI. A helical transmembrane segment spans residues 21–40; sequence GKIWLTVLFIFRIMILVVAA. The Extracellular portion of the chain corresponds to 41-73; the sequence is KEVWGDEQADFVCNTLQPGCKNVCYDHYFPISH. Ca(2+) contacts are provided by glutamate 42, glycine 45, and glutamate 47. Disulfide bonds link cysteine 53/cysteine 180, cysteine 60/cysteine 174, and cysteine 64/cysteine 169. Residues 74–94 traverse the membrane as a helical segment; that stretch reads IRLWALQLIFVSTPALLVAMH. Topologically, residues 95–135 are cytoplasmic; that stretch reads VAYYRHEKKRKFIRGEIKTEFKDIEEIKNQKVRIEGSLWWT. The chain crosses the membrane as a helical span at residues 136 to 156; that stretch reads YTGSIFFRVIFEAAFMYVFYV. The Extracellular segment spans residues 157–189; the sequence is MYDGFAMQRLVKCNAWPCPNTVDCFVSRPTEKT. Residues 190 to 210 traverse the membrane as a helical segment; that stretch reads VFTVFMIAVSGICILLNVTEL. Over 211-226 the chain is Cytoplasmic; the sequence is CYLLIRFCSGKSKKPV.

Belongs to the connexin family. Beta-type (group I) subfamily. A hemichannel or connexon is composed of a hexamer of connexins. A functional gap junction is formed by the apposition of two hemichannels. Forms heteromeric channels with GJB4. Interacts with CNST.

It is found in the cell membrane. It localises to the cell junction. The protein resides in the gap junction. Its function is as follows. Structural component of gap junctions. Gap junctions are dodecameric channels that connect the cytoplasm of adjoining cells. They are formed by the docking of two hexameric hemichannels, one from each cell membrane. Small molecules and ions diffuse from one cell to a neighboring cell via the central pore. The protein is Gap junction beta-2 protein (GJB2) of Ovis aries (Sheep).